The following is a 274-amino-acid chain: uncharacterized protein (274 aa).

Residue 104 to 111 (GVFAIGKS) participates in ATP binding.

This is an uncharacterized protein from Mycoplasma genitalium (strain ATCC 33530 / DSM 19775 / NCTC 10195 / G37) (Mycoplasmoides genitalium).